Reading from the N-terminus, the 148-residue chain is Deoxyuridine 5'-triphosphate nucleotidohydrolase (148 aa).

Residues 67 to 69 (RSG), Asn80, 84 to 86 (LID), and Met94 contribute to the substrate site.

It belongs to the dUTPase family. Mg(2+) serves as cofactor.

It catalyses the reaction dUTP + H2O = dUMP + diphosphate + H(+). Its pathway is pyrimidine metabolism; dUMP biosynthesis; dUMP from dCTP (dUTP route): step 2/2. Functionally, this enzyme is involved in nucleotide metabolism: it produces dUMP, the immediate precursor of thymidine nucleotides and it decreases the intracellular concentration of dUTP so that uracil cannot be incorporated into DNA. The protein is Deoxyuridine 5'-triphosphate nucleotidohydrolase of Paraburkholderia phytofirmans (strain DSM 17436 / LMG 22146 / PsJN) (Burkholderia phytofirmans).